Reading from the N-terminus, the 231-residue chain is Probable transglycosylase SceD (231 aa).

The N-terminal stretch at 1–27 (MKKTLLASSLAVGLGIVAGNAGHEAHA) is a signal peptide. Polar residues predominate over residues 103 to 116 (APSAVQANQVQSQE). Positions 103–153 (APSAVQANQVQSQEVEAPQNAQTQQPQASTSNNSQVTATPTESKSSEGSSV) are disordered. A compositionally biased stretch (low complexity) spans 119-137 (APQNAQTQQPQASTSNNSQ). The span at 138–153 (VTATPTESKSSEGSSV) shows a compositional bias: polar residues.

It belongs to the transglycosylase family. SceD subfamily.

It localises to the secreted. Functionally, is able to cleave peptidoglycan and affects clumping and separation of bacterial cells. The chain is Probable transglycosylase SceD (sceD) from Staphylococcus aureus (strain COL).